We begin with the raw amino-acid sequence, 61 residues long: Small ribosomal subunit protein uS14 (61 aa).

Zn(2+)-binding residues include cysteine 24, cysteine 27, cysteine 40, and cysteine 43.

The protein belongs to the universal ribosomal protein uS14 family. Zinc-binding uS14 subfamily. As to quaternary structure, part of the 30S ribosomal subunit. Contacts proteins S3 and S10. Requires Zn(2+) as cofactor.

Binds 16S rRNA, required for the assembly of 30S particles and may also be responsible for determining the conformation of the 16S rRNA at the A site. This Deinococcus geothermalis (strain DSM 11300 / CIP 105573 / AG-3a) protein is Small ribosomal subunit protein uS14.